Reading from the N-terminus, the 203-residue chain is ADP-ribosylation factor-like protein 6-interacting protein 1 (203 aa).

At 1 to 41 the chain is on the cytoplasmic side; that stretch reads MAEGDNRSSNLLAVETASLEEQLQGWGEVMLMADKVLRWER. Residues 42–62 traverse the membrane as a helical segment; the sequence is AWFPPAIMGVVSLLFLIIYYL. The Lumenal segment spans residues 63–65; sequence DPS. Residues 66–86 traverse the membrane as a helical segment; it reads VLSGVSCFVMFLCLADYLVPI. Residues 87–133 lie on the Cytoplasmic side of the membrane; it reads LAPRIFGSNKWTTEQQQRFHEICSNLVKTRRRAVGWWKRLFSLKEEK. A helical membrane pass occupies residues 134–175; sequence PKMYFMTMIISLAAVAWVGQQVHNLLLTYLIVTFVLLLPGLN. At 176–203 the chain is on the lumenal side; sequence QHGIILKYIGMAKREINKLLKQKEKKNE.

This sequence belongs to the ARL6ip family. As to quaternary structure, homooligomer. Heterodimer with ARL6IP5. Interacts with ARL6. Interacts with TMEM33. Interacts with ATL1. Expressed in the cerebral cortex, cerebellum, hippocampus, olfactory bulbs, medulla oblongate and limbic system (at protein level). Ubiquitous. Expressed in all hematopoietic cell lineages, with highest levels in early myeloid progenitor cells.

It is found in the endomembrane system. The protein resides in the endoplasmic reticulum membrane. Its subcellular location is the endoplasmic reticulum. Positively regulates SLC1A1/EAAC1-mediated glutamate transport by increasing its affinity for glutamate in a PKC activity-dependent manner. Promotes the catalytic efficiency of SLC1A1/EAAC1 probably by reducing its interaction with ARL6IP5, a negative regulator of SLC1A1/EAAC1-mediated glutamate transport. Plays a role in the formation and stabilization of endoplasmic reticulum tubules. Negatively regulates apoptosis, possibly by modulating the activity of caspase-9 (CASP9). Inhibits cleavage of CASP9-dependent substrates and downstream markers of apoptosis but not CASP9 itself. May be involved in protein transport, membrane trafficking, or cell signaling during hematopoietic maturation. This is ADP-ribosylation factor-like protein 6-interacting protein 1 (Arl6ip1) from Mus musculus (Mouse).